A 505-amino-acid chain; its full sequence is Probable alpha-L-arabinofuranosidase C (505 aa).

Residues Asn81, Asn152, Asn269, and Asn438 are each glycosylated (N-linked (GlcNAc...) asparagine).

The protein belongs to the glycosyl hydrolase 51 family.

It is found in the secreted. It catalyses the reaction Hydrolysis of terminal non-reducing alpha-L-arabinofuranoside residues in alpha-L-arabinosides.. It functions in the pathway glycan metabolism; L-arabinan degradation. In terms of biological role, alpha-L-arabinofuranosidase involved in the degradation of arabinoxylan, a major component of plant hemicellulose. Acts only on small linear 1,5-alpha-linked L-arabinofuranosyl oligosaccharides. This chain is Probable alpha-L-arabinofuranosidase C (abfC), found in Aspergillus fumigatus (strain ATCC MYA-4609 / CBS 101355 / FGSC A1100 / Af293) (Neosartorya fumigata).